We begin with the raw amino-acid sequence, 429 residues long: Lysophosphatidic acid phosphatase type 6 (429 aa).

Residues 1–32 (MISRVFKLRMWAPVGVLTSLTYCLHQRRVALA) constitute a mitochondrion transit peptide. Residues 58-169 (RHGARSPLKP…VFIRSTNIYR (112 aa)) are substrate binding. Residue His-59 is the Nucleophile of the active site. The active-site Proton donor is the Asp-336.

This sequence belongs to the histidine acid phosphatase family. As to quaternary structure, monomer. As to expression, detected in brain (at protein level).

Its subcellular location is the mitochondrion. It carries out the reaction a phosphate monoester + H2O = an alcohol + phosphate. The enzyme catalyses 1-(9Z-octadecenoyl)-sn-glycero-3-phosphate + H2O = 1-(9Z-octadecenoyl)-sn-glycerol + phosphate. In terms of biological role, hydrolyzes lysophosphatidic acid (LPA) containing a medium length fatty acid chain to the corresponding monoacylglycerol. Has highest activity with lysophosphatidic acid containing myristate (C14:0), monounsaturated oleate (C18:1) or palmitate (C16:0), and lower activity with C18:0 and C6:0 lysophosphatidic acid. The chain is Lysophosphatidic acid phosphatase type 6 (ACP6) from Bos taurus (Bovine).